The sequence spans 311 residues: Lipoyl synthase (311 aa).

Residues Cys-47, Cys-52, Cys-58, Cys-73, Cys-77, Cys-80, and Ser-286 each coordinate [4Fe-4S] cluster. In terms of domain architecture, Radical SAM core spans 59-276 (WSRHTATYLA…RSVGESLGLF (218 aa)).

This sequence belongs to the radical SAM superfamily. Lipoyl synthase family. It depends on [4Fe-4S] cluster as a cofactor.

It localises to the cytoplasm. The catalysed reaction is [[Fe-S] cluster scaffold protein carrying a second [4Fe-4S](2+) cluster] + N(6)-octanoyl-L-lysyl-[protein] + 2 oxidized [2Fe-2S]-[ferredoxin] + 2 S-adenosyl-L-methionine + 4 H(+) = [[Fe-S] cluster scaffold protein] + N(6)-[(R)-dihydrolipoyl]-L-lysyl-[protein] + 4 Fe(3+) + 2 hydrogen sulfide + 2 5'-deoxyadenosine + 2 L-methionine + 2 reduced [2Fe-2S]-[ferredoxin]. It functions in the pathway protein modification; protein lipoylation via endogenous pathway; protein N(6)-(lipoyl)lysine from octanoyl-[acyl-carrier-protein]: step 2/2. Catalyzes the radical-mediated insertion of two sulfur atoms into the C-6 and C-8 positions of the octanoyl moiety bound to the lipoyl domains of lipoate-dependent enzymes, thereby converting the octanoylated domains into lipoylated derivatives. In Chlamydia trachomatis serovar A (strain ATCC VR-571B / DSM 19440 / HAR-13), this protein is Lipoyl synthase.